A 158-amino-acid chain; its full sequence is Cysteine proteinase inhibitor 4 (158 aa).

The first 24 residues, Met-1–Ala-24, serve as a signal peptide directing secretion. Residues Ser-26–Gly-51 form a disordered region. Positions Arg-29–Arg-49 are enriched in gly residues. In terms of domain architecture, Cystatin spans Gly-51 to Glu-116. A Secondary area of contact motif is present at residues Gln-101–Gly-105.

This sequence belongs to the cystatin family. Phytocystatin subfamily.

It localises to the secreted. Its function is as follows. Specific inhibitor of cysteine proteinases. Probably involved in the regulation of endogenous processes and in defense against pests and pathogens. The polypeptide is Cysteine proteinase inhibitor 4 (Oryza sativa subsp. japonica (Rice)).